Reading from the N-terminus, the 622-residue chain is Membrane protein insertase YidC (622 aa).

Residues 6–26 (IVLLIIFSTSLLFLWDAWVKE) form a helical membrane-spanning segment. The tract at residues 47-87 (TQSKNNDGLPIPGSELTASQTGSDLNGIPSSGDTADSVTPR) is disordered. Over residues 62-83 (LTASQTGSDLNGIPSSGDTADS) the composition is skewed to polar residues. Helical transmembrane passes span 381–401 (WGIAIILLTITVKLLFFPLSA), 451–471 (FPILVQIPVFIALYWTILAAV), and 525–545 (PVAFSAIFFFFPAGLVLYSLV). Positions 563–622 (TAPSQDAPESPASKDAPELPVSNQVINDSENTEAPASGPADSPKKPVNIPRRMHKRTRKK) are disordered. Positions 583–596 (VSNQVINDSENTEA) are enriched in polar residues. A compositionally biased stretch (basic residues) spans 613-622 (RRMHKRTRKK).

Belongs to the OXA1/ALB3/YidC family. Type 1 subfamily. As to quaternary structure, interacts with the Sec translocase complex via SecD. Specifically interacts with transmembrane segments of nascent integral membrane proteins during membrane integration.

The protein localises to the cell inner membrane. Its function is as follows. Required for the insertion and/or proper folding and/or complex formation of integral membrane proteins into the membrane. Involved in integration of membrane proteins that insert both dependently and independently of the Sec translocase complex, as well as at least some lipoproteins. Aids folding of multispanning membrane proteins. The chain is Membrane protein insertase YidC from Nitrosomonas eutropha (strain DSM 101675 / C91 / Nm57).